Here is a 356-residue protein sequence, read N- to C-terminus: Guanine nucleotide-binding protein alpha-17 subunit (356 aa).

Glycine 2 is lipidated: N-myristoyl glycine. A lipid anchor (S-palmitoyl cysteine) is attached at cysteine 4. In terms of domain architecture, G-alpha spans 32–356; sequence SIVKLLLLGA…QKNLQKAGMM (325 aa). Residues 35 to 48 form a G1 motif region; the sequence is KLLLLGAGECGKST. GTP-binding positions include 40-47, 177-183, 202-206, 271-274, and alanine 328; these read GAGECGKS, LYSRVAT, DVGGQ, and NKKD. Serine 47 and threonine 183 together coordinate Mg(2+). A G2 motif region spans residues 175–183; the sequence is DILYSRVAT. Residues 198–207 are G3 motif; the sequence is FRVFDVGGQR. Positions 267–274 are G4 motif; sequence ILFMNKKD. Residues 326–331 form a G5 motif region; it reads TCATDT.

Belongs to the G-alpha family. G proteins are composed of 3 units; alpha, beta and gamma. The alpha chain contains the guanine nucleotide binding site. Expressed in sensory neurons in the head and tail. Expressed in amphid AWC neurons, to a lesser extent in AWB and weakly in AWA, ASH and ADF neurons (head sensory neurons). Expressed in phasmid PHA and PHB neurons (tail sensory neurons).

It localises to the cell projection. The protein localises to the cilium. Its subcellular location is the dendrite. In terms of biological role, guanine nucleotide-binding proteins (G proteins) are involved as modulators or transducers in various transmembrane signaling systems. This specific G-alpha subunit plays an important role in olfaction and in cilia morphogenesis. Involved in chemotactic responses to attractants diacetyl, pyrazine, 2,4,5-trimethylthiazole, benzaldehyde, isoamyl alcohol, butanone and 2,3-pentanedione. Displays a redundant function with gpa-3 in chemotactic responses. Plays a role in the avoidance response to the noxious chemical quinine in ASH sensory neurons. Involved in avoidance responses to copper, sodium dodecyl sulfate and linoleic acid. Involved in osmotic avoidance and mechanosensory responses. Involved in specifying fan-like morphology of cilia of head sensory neurons AWC. Plays a role in the detection of preferred food sources by mediating the recognition of food odors in olfactory sensory neurons. In Caenorhabditis elegans, this protein is Guanine nucleotide-binding protein alpha-17 subunit.